Reading from the N-terminus, the 363-residue chain is Cytoplasmic tRNA 2-thiolation protein 1 (363 aa).

Residues 340–363 form a disordered region; it reads ASLNGTPRTPPTPAEPVEGIERAA.

This sequence belongs to the TtcA family. CTU1/NCS6/ATPBD3 subfamily.

The protein localises to the cytoplasm. Its pathway is tRNA modification; 5-methoxycarbonylmethyl-2-thiouridine-tRNA biosynthesis. In terms of biological role, plays a central role in 2-thiolation of mcm(5)S(2)U at tRNA wobble positions of tRNA(Lys), tRNA(Glu) and tRNA(Gln). Directly binds tRNAs and probably acts by catalyzing adenylation of tRNAs, an intermediate required for 2-thiolation. It is unclear whether it acts as a sulfurtransferase that transfers sulfur from thiocarboxylated URM1 onto the uridine of tRNAs at wobble position. Prior mcm(5) tRNA modification by the elongator complex is required for 2-thiolation. May also be involved in protein urmylation. In Cryptococcus neoformans var. neoformans serotype D (strain B-3501A) (Filobasidiella neoformans), this protein is Cytoplasmic tRNA 2-thiolation protein 1.